Here is a 303-residue protein sequence, read N- to C-terminus: UPF0282 protein PAE3680 (303 aa).

This sequence belongs to the UPF0282 family.

This Pyrobaculum aerophilum (strain ATCC 51768 / DSM 7523 / JCM 9630 / CIP 104966 / NBRC 100827 / IM2) protein is UPF0282 protein PAE3680.